We begin with the raw amino-acid sequence, 147 residues long: Hemoglobin subunit deltaH (147 aa).

Residues 3 to 147 form the Globin domain; it reads RLTDSEKAEV…MANALAHKYH (145 aa). Positions 64 and 93 each coordinate heme b.

It belongs to the globin family. In terms of assembly, heterotetramer of two delta chains and two alpha chains. As to expression, red blood cells.

The polypeptide is Hemoglobin subunit deltaH (Heterohyrax brucei (Yellow-spotted hyrax)).